The chain runs to 379 residues: Elongation factor Ts, mitochondrial (379 aa).

The transit peptide at 1–33 (MAWGQGAKRSILGLLFRSQHQTARAYSSSAFQT) directs the protein to the mitochondrion.

The protein belongs to the EF-Ts family.

Its subcellular location is the mitochondrion. Associates with the EF-Tu.GDP complex and induces the exchange of GDP to GTP. It remains bound to the aminoacyl-tRNA.EF-Tu.GTP complex up to the GTP hydrolysis stage on the ribosome. The protein is Elongation factor Ts, mitochondrial of Zea mays (Maize).